The following is a 693-amino-acid chain: Serine/threonine-protein kinase Pkn1 (693 aa).

The 270-residue stretch at 59–328 (FRLVRRLGRG…QVALAEHVRV (270 aa)) folds into the Protein kinase domain. Residues 65–73 (LGRGGMGAV) and Lys-88 each bind ATP. The active-site Proton acceptor is the Asp-180. One can recognise a PilZ domain in the interval 393-491 (LVEVPVQVVL…LKAAVDALLQ (99 aa)). A TPR repeat occupies 630–663 (ARSHFQSGGALERDGQLSQALDQYERGLKLAPLE).

Belongs to the protein kinase superfamily. Ser/Thr protein kinase family. Autophosphorylated.

It catalyses the reaction L-seryl-[protein] + ATP = O-phospho-L-seryl-[protein] + ADP + H(+). It carries out the reaction L-threonyl-[protein] + ATP = O-phospho-L-threonyl-[protein] + ADP + H(+). Its activity is regulated as follows. May be regulated by calcium or a calmodulin-like protein. Plays an essential role in proper timing of early development events. The chain is Serine/threonine-protein kinase Pkn1 (pkn1) from Myxococcus xanthus.